A 262-amino-acid chain; its full sequence is 2-keto-4-pentenoate hydratase (262 aa).

It belongs to the hydratase/decarboxylase family. MhpD subfamily. Requires a divalent metal cation as cofactor.

The catalysed reaction is (S)-4-hydroxy-2-oxopentanoate = (2Z)-2-hydroxypenta-2,4-dienoate + H2O. It participates in aromatic compound metabolism; 3-phenylpropanoate degradation. Functionally, catalyzes the conversion of 2-hydroxypentadienoic acid (enolic form of 2-oxopent-4-enoate) to 4-hydroxy-2-ketopentanoic acid. The polypeptide is 2-keto-4-pentenoate hydratase (Burkholderia vietnamiensis (strain G4 / LMG 22486) (Burkholderia cepacia (strain R1808))).